The primary structure comprises 178 residues: Ribulose bisphosphate carboxylase small subunit, chloroplastic (178 aa).

The N-terminal 54 residues, 1–54 (MALISSAAVTTINRAPVQANLATPFTGLKSSAGFPVTKKNNDITSITSNGSRVN), are a transit peptide targeting the chloroplast.

The protein belongs to the RuBisCO small chain family. Heterohexadecamer of 8 large and 8 small subunits.

It is found in the plastid. It localises to the chloroplast. In terms of biological role, ruBisCO catalyzes two reactions: the carboxylation of D-ribulose 1,5-bisphosphate, the primary event in carbon dioxide fixation, as well as the oxidative fragmentation of the pentose substrate. Both reactions occur simultaneously and in competition at the same active site. Although the small subunit is not catalytic it is essential for maximal activity. The chain is Ribulose bisphosphate carboxylase small subunit, chloroplastic from Trifolium repens (Creeping white clover).